We begin with the raw amino-acid sequence, 172 residues long: NAD(P)H-quinone oxidoreductase subunit I, chloroplastic (172 aa).

2 consecutive 4Fe-4S ferredoxin-type domains span residues 55 to 84 (GRIHFEFDKCIACEVCVRVCPIDLPVVDWK) and 95 to 124 (LNYSIDFGICIFCGNCVEYCPTNCLSMTEE). The [4Fe-4S] cluster site is built by Cys64, Cys67, Cys70, Cys74, Cys104, Cys107, Cys110, and Cys114.

The protein belongs to the complex I 23 kDa subunit family. As to quaternary structure, NDH is composed of at least 16 different subunits, 5 of which are encoded in the nucleus. [4Fe-4S] cluster is required as a cofactor.

Its subcellular location is the plastid. The protein localises to the chloroplast thylakoid membrane. It catalyses the reaction a plastoquinone + NADH + (n+1) H(+)(in) = a plastoquinol + NAD(+) + n H(+)(out). The enzyme catalyses a plastoquinone + NADPH + (n+1) H(+)(in) = a plastoquinol + NADP(+) + n H(+)(out). Functionally, NDH shuttles electrons from NAD(P)H:plastoquinone, via FMN and iron-sulfur (Fe-S) centers, to quinones in the photosynthetic chain and possibly in a chloroplast respiratory chain. The immediate electron acceptor for the enzyme in this species is believed to be plastoquinone. Couples the redox reaction to proton translocation, and thus conserves the redox energy in a proton gradient. The protein is NAD(P)H-quinone oxidoreductase subunit I, chloroplastic of Capsella bursa-pastoris (Shepherd's purse).